Reading from the N-terminus, the 254-residue chain is 5-oxoprolinase subunit A (254 aa).

Belongs to the LamB/PxpA family. Forms a complex composed of PxpA, PxpB and PxpC.

It carries out the reaction 5-oxo-L-proline + ATP + 2 H2O = L-glutamate + ADP + phosphate + H(+). Catalyzes the cleavage of 5-oxoproline to form L-glutamate coupled to the hydrolysis of ATP to ADP and inorganic phosphate. The polypeptide is 5-oxoprolinase subunit A (Burkholderia orbicola (strain MC0-3)).